The chain runs to 263 residues: HTH-type transcriptional repressor NanR (263 aa).

A disordered region spans residues 1 to 22; sequence MGLMNAFDSQTEDSSPAIGRNL. The HTH gntR-type domain maps to 30-98; it reads KKLSEMVEEE…NGERARVSRP (69 aa). The H-T-H motif DNA-binding region spans 58–77; the sequence is ERELMAFFNVGRPSVREALA.

It belongs to the NanR family.

Its function is as follows. Transcriptional repressor that controls expression of the genes required for the catabolism of sialic acids. This is HTH-type transcriptional repressor NanR from Shigella sonnei (strain Ss046).